The following is a 159-amino-acid chain: Peptide deformylase (159 aa).

Cys88 and His130 together coordinate Fe cation. Glu131 is an active-site residue. His134 provides a ligand contact to Fe cation.

It belongs to the polypeptide deformylase family. The cofactor is Fe(2+).

It catalyses the reaction N-terminal N-formyl-L-methionyl-[peptide] + H2O = N-terminal L-methionyl-[peptide] + formate. Removes the formyl group from the N-terminal Met of newly synthesized proteins. Requires at least a dipeptide for an efficient rate of reaction. N-terminal L-methionine is a prerequisite for activity but the enzyme has broad specificity at other positions. This Thermoanaerobacter pseudethanolicus (strain ATCC 33223 / 39E) (Clostridium thermohydrosulfuricum) protein is Peptide deformylase.